We begin with the raw amino-acid sequence, 336 residues long: Phospho-N-acetylmuramoyl-pentapeptide-transferase (336 aa).

Transmembrane regions (helical) follow at residues 1–21 (MLPL…SLFL), 56–76 (IPTA…LLLF), 78–98 (IQLW…ALGW), 124–144 (CLAA…FLSF), 148–168 (FLGI…FAIA), 184–204 (GLDG…LVVA), 210–230 (PWAF…LGFL), 239–259 (VFMG…CAVL), 264–284 (FLLL…IVQV), and 314–334 (VVRN…IAVF).

The protein belongs to the glycosyltransferase 4 family. MraY subfamily. It depends on Mg(2+) as a cofactor.

The protein localises to the cell inner membrane. The enzyme catalyses UDP-N-acetyl-alpha-D-muramoyl-L-alanyl-gamma-D-glutamyl-meso-2,6-diaminopimeloyl-D-alanyl-D-alanine + di-trans,octa-cis-undecaprenyl phosphate = di-trans,octa-cis-undecaprenyl diphospho-N-acetyl-alpha-D-muramoyl-L-alanyl-D-glutamyl-meso-2,6-diaminopimeloyl-D-alanyl-D-alanine + UMP. Its pathway is cell wall biogenesis; peptidoglycan biosynthesis. In terms of biological role, catalyzes the initial step of the lipid cycle reactions in the biosynthesis of the cell wall peptidoglycan: transfers peptidoglycan precursor phospho-MurNAc-pentapeptide from UDP-MurNAc-pentapeptide onto the lipid carrier undecaprenyl phosphate, yielding undecaprenyl-pyrophosphoryl-MurNAc-pentapeptide, known as lipid I. The sequence is that of Phospho-N-acetylmuramoyl-pentapeptide-transferase from Chlamydia trachomatis serovar L2b (strain UCH-1/proctitis).